Reading from the N-terminus, the 178-residue chain is Inner membrane-spanning protein YciB (178 aa).

Helical transmembrane passes span 22–42 (IFWATAALIVATALAVIYSWY), 50–70 (MTLVTFVLVAVFGGLTIYFHN), 76–96 (WKVTIIYALFAGALLIGQWVM), 121–141 (IAWALFFIFCGLLNIYVAFWL), and 149–169 (FKVFGIPGLTLVFTLLSGVYI).

Belongs to the YciB family.

It is found in the cell inner membrane. Its function is as follows. Plays a role in cell envelope biogenesis, maintenance of cell envelope integrity and membrane homeostasis. The sequence is that of Inner membrane-spanning protein YciB from Cronobacter sakazakii (strain ATCC BAA-894) (Enterobacter sakazakii).